The following is a 372-amino-acid chain: Protein REVEILLE 7 (372 aa).

Positions 71–125 constitute an HTH myb-type domain; sequence TVTKQREKWSEEEHDRFLEAIKLYGRGWRQIQEHIGTKTAVQIRSHAQKFFSKMA. The H-T-H motif DNA-binding region spans 98–121; sequence WRQIQEHIGTKTAVQIRSHAQKFF. The tract at residues 124-204 is disordered; the sequence is MAQEADSRSE…RCSSPNSCTS (81 aa). The span at 145–155 shows a compositional bias: basic residues; sequence RPKRKPAHPYP. The segment covering 156 to 169 has biased composition (pro residues); it reads RKSPVPYTQSPPPN. A compositionally biased stretch (polar residues) spans 178–204; that stretch reads KSPTSVLSSFGSEDQVNRCSSPNSCTS.

It is found in the nucleus. Functionally, transcription factor involved in phytochrome A-mediated cotyledon opening. Controlled by the central oscillator mediated by LHY and CCA1. Part of a regulatory circadian feedback loop. Regulates its own expression. This Arabidopsis thaliana (Mouse-ear cress) protein is Protein REVEILLE 7 (RVE7).